The chain runs to 212 residues: Large ribosomal subunit protein bL25 (212 aa).

The interval 1 to 25 (MSQSTIHKIAVKKRTETGKNENNRL) is disordered. Residues 13–24 (KRTETGKNENNR) show a composition bias toward basic and acidic residues.

This sequence belongs to the bacterial ribosomal protein bL25 family. CTC subfamily. Part of the 50S ribosomal subunit; part of the 5S rRNA/L5/L18/L25 subcomplex. Contacts the 5S rRNA. Binds to the 5S rRNA independently of L5 and L18.

This is one of the proteins that binds to the 5S RNA in the ribosome where it forms part of the central protuberance. The polypeptide is Large ribosomal subunit protein bL25 (Leptospira borgpetersenii serovar Hardjo-bovis (strain L550)).